The following is a 343-amino-acid chain: Dihydroorotase (343 aa).

Residues His13 and His15 each contribute to the Zn(2+) site. Substrate contacts are provided by residues 15-17 and Asn41; that span reads HFR. Lys98, His135, and His173 together coordinate Zn(2+). Lys98 bears the N6-carboxylysine mark. Residue His135 participates in substrate binding. Leu218 is a binding site for substrate. Asp246 is a Zn(2+) binding site. Residue Asp246 is part of the active site. The substrate site is built by His250 and Ala262.

Belongs to the metallo-dependent hydrolases superfamily. DHOase family. Class II DHOase subfamily. In terms of assembly, homodimer. It depends on Zn(2+) as a cofactor.

The catalysed reaction is (S)-dihydroorotate + H2O = N-carbamoyl-L-aspartate + H(+). It participates in pyrimidine metabolism; UMP biosynthesis via de novo pathway; (S)-dihydroorotate from bicarbonate: step 3/3. In terms of biological role, catalyzes the reversible cyclization of carbamoyl aspartate to dihydroorotate. The polypeptide is Dihydroorotase (Marinomonas sp. (strain MWYL1)).